We begin with the raw amino-acid sequence, 174 residues long: Endoribonuclease YbeY (174 aa).

Zn(2+)-binding residues include His-133, His-137, and His-143.

This sequence belongs to the endoribonuclease YbeY family. Zn(2+) is required as a cofactor.

Its subcellular location is the cytoplasm. In terms of biological role, single strand-specific metallo-endoribonuclease involved in late-stage 70S ribosome quality control and in maturation of the 3' terminus of the 16S rRNA. This Paracoccus denitrificans (strain Pd 1222) protein is Endoribonuclease YbeY.